A 234-amino-acid chain; its full sequence is Thiamine import ATP-binding protein ThiQ (234 aa).

Residues 2–230 form the ABC transporter domain; it reads LTLQQVHYYY…HSHPELVEFF (229 aa). 32 to 39 contacts ATP; that stretch reads GPSGAGKS.

It belongs to the ABC transporter superfamily. Thiamine importer (TC 3.A.1.19.1) family. The complex is composed of two ATP-binding proteins (ThiQ), two transmembrane proteins (ThiP) and a solute-binding protein (ThiB).

It localises to the cell inner membrane. It catalyses the reaction thiamine(out) + ATP + H2O = thiamine(in) + ADP + phosphate + H(+). Part of the ABC transporter complex ThiBPQ involved in thiamine import. Responsible for energy coupling to the transport system. This Vibrio vulnificus (strain CMCP6) protein is Thiamine import ATP-binding protein ThiQ.